Reading from the N-terminus, the 799-residue chain is Ribonucleoside-diphosphate reductase large subunit (799 aa).

Substrate-binding positions include Thr-192, 207-208 (SC), Gly-238, 408-412 (NLCAE), and 612-616 (PTAGT). Cys-208 and Cys-424 are disulfide-bonded. The Proton acceptor role is filled by Asn-408. Catalysis depends on Cys-410, which acts as the Cysteine radical intermediate. Glu-412 serves as the catalytic Proton acceptor. Residues 765-799 (PDSGDGVGGYKGGDEEPRSPEHAQCESPDRCLSCQ) form a disordered region. The span at 776-793 (GGDEEPRSPEHAQCESPD) shows a compositional bias: basic and acidic residues.

Belongs to the ribonucleoside diphosphate reductase large chain family. Heterotetramer composed of a homodimer of the large subunit (R1) and a homodimer of the small subunit (R2). Larger multisubunit protein complex are also active, composed of (R1)n(R2)n.

It catalyses the reaction a 2'-deoxyribonucleoside 5'-diphosphate + [thioredoxin]-disulfide + H2O = a ribonucleoside 5'-diphosphate + [thioredoxin]-dithiol. Functionally, ribonucleoside-diphosphate reductase holoenzyme provides the precursors necessary for viral DNA synthesis. Allows virus growth in non-dividing cells, as well as reactivation from latency in infected hosts. Catalyzes the biosynthesis of deoxyribonucleotides from the corresponding ribonucleotides. The sequence is that of Ribonucleoside-diphosphate reductase large subunit from Equine herpesvirus 2 (strain 86/87) (EHV-2).